The primary structure comprises 1048 residues: B3 domain-containing protein Os02g0598200 (1048 aa).

Residues methionine 1–asparagine 345 are disordered. Positions serine 16–arginine 25 are enriched in basic residues. Basic and acidic residues-rich tracts occupy residues asparagine 26–methionine 134, lysine 151–lysine 162, cysteine 169–lysine 214, lysine 243–lysine 253, alanine 281–lysine 295, and leucine 332–asparagine 345. The segment at residues alanine 375–aspartate 468 is a DNA-binding region (TF-B3 1). Residues glutamine 505–proline 528 are disordered. The TF-B3 2 DNA-binding region spans leucine 953–lysine 1048.

It is found in the nucleus. This chain is B3 domain-containing protein Os02g0598200, found in Oryza sativa subsp. japonica (Rice).